The primary structure comprises 415 residues: Phosphoglycerate kinase (415 aa).

Residues 27–29, Arg44, 67–70, Arg124, and Arg164 each bind substrate; these read DVN and HQGR. ATP contacts are provided by residues Glu336 and 362–365; that span reads GGHM.

Belongs to the phosphoglycerate kinase family. Monomer.

It is found in the cytoplasm. It carries out the reaction (2R)-3-phosphoglycerate + ATP = (2R)-3-phospho-glyceroyl phosphate + ADP. Its pathway is carbohydrate degradation; glycolysis; pyruvate from D-glyceraldehyde 3-phosphate: step 2/5. This Sulfolobus acidocaldarius (strain ATCC 33909 / DSM 639 / JCM 8929 / NBRC 15157 / NCIMB 11770) protein is Phosphoglycerate kinase.